Consider the following 334-residue polypeptide: Beta-1,3-N-acetylglucosaminyltransferase radical fringe (334 aa).

The Cytoplasmic segment spans residues 1–6 (MSRVRR). Residues 7–29 (VLCRACLALAAVLAVLLLLPLPL) form a helical; Signal-anchor for type II membrane protein membrane-spanning segment. Topologically, residues 30-334 (PLPLPLPRAP…MKNRGKEAFQ (305 aa)) are lumenal. Substrate is bound at residue Arg-77. An N-linked (GlcNAc...) asparagine glycan is attached at Asn-116. Cystine bridges form between Cys-117–Cys-128 and Cys-146–Cys-210. Asp-150 contributes to the substrate binding site. A Mn(2+)-binding site is contributed by Asp-151. The active site involves Asp-240. Mn(2+) is bound at residue His-264. The cysteines at positions 314 and 323 are disulfide-linked.

It belongs to the glycosyltransferase 31 family. Mn(2+) serves as cofactor. As to expression, most abundantly expressed in adult brain. Expressed in most neurons of the brain but not in glial cells. Also detected to a lower extent in adult lung and kidney.

The protein localises to the golgi apparatus membrane. It catalyses the reaction 3-O-(alpha-L-fucosyl)-L-threonyl-[EGF-like domain protein] + UDP-N-acetyl-alpha-D-glucosamine = 3-O-(N-acetyl-beta-D-glucosaminyl-(1-&gt;3)-alpha-L-fucosyl)-L-threonyl-[EGF-like domain protein] + UDP + H(+). It carries out the reaction 3-O-(alpha-L-fucosyl)-L-seryl-[EGF-like domain protein] + UDP-N-acetyl-alpha-D-glucosamine = 3-O-(N-acetyl-beta-D-glucosaminyl-(1-&gt;3)-alpha-L-fucosyl)-L-seryl-[EGF-like domain protein] + UDP + H(+). Functionally, glycosyltransferase that initiates the elongation of O-linked fucose residues attached to EGF-like repeats in the extracellular domain of Notch molecules. Modulates NOTCH1 activity by modifying O-fucose residues at specific EGF-like domains resulting in enhancement of NOTCH1 activation by DLL1 and JAG1. Inhibits Notch signaling in postmitotic neurons of the brain. It may play a role in adult brain and in neurogenesis. It may play a role in limb development. The polypeptide is Beta-1,3-N-acetylglucosaminyltransferase radical fringe (Rattus norvegicus (Rat)).